Consider the following 520-residue polypeptide: Leucine carboxyl methyltransferase 1 (520 aa).

Disordered regions lie at residues 1–116 (MQRD…DDAV) and 142–174 (TQEF…SIRR). A compositionally biased stretch (low complexity) spans 79 to 89 (PSLRLSLGLPR). Polar residues-rich tracts occupy residues 95-110 (HSGQ…STAR) and 142-151 (TQEFSSTLPS). S-adenosyl-L-methionine-binding positions include R185, G210, D237, 305-306 (DV), and E343.

The protein belongs to the methyltransferase superfamily. LCMT family.

The catalysed reaction is [phosphatase 2A protein]-C-terminal L-leucine + S-adenosyl-L-methionine = [phosphatase 2A protein]-C-terminal L-leucine methyl ester + S-adenosyl-L-homocysteine. Methylates the carboxyl group of the C-terminal leucine residue of protein phosphatase 2A catalytic subunits to form alpha-leucine ester residues. This Mycosarcoma maydis (Corn smut fungus) protein is Leucine carboxyl methyltransferase 1 (PPM1).